The chain runs to 366 residues: MAKLSLRNVQKTYAGSVQVVHGIDMEIADGEFIVIVGPSGCGKSTLLRMVAGLETITGGEIHIGDKVVNNLEPAERDIAMVFQNYALYPHMSVYDNMAYGLKIRGMAKAEIAQRVNHAAGILELAPLLDRKPRQLSGGQRQRVAMGRAIVREPAVFLFDEPLSNLDAKLRVQMRLELKELHRRLGTTSLYVTHDQVEAMTLADRMMVLNAGRVEQIGTPLEVYSRPASTFVAGFIGSPPMNLIPVARNAGGDTGAQMRVVAKEGEAANATLGHLPMGLHLPEQALLGLRPEHIEPCAAHEAIAEVDVRVVEALGADSFAYGSLGGQAVVVRLDSHAHVRAGDRLPVTSSAEHLHFFAPDTGKRIEA.

The region spanning 4 to 235 (LSLRNVQKTY…PASTFVAGFI (232 aa)) is the ABC transporter domain. Residue 37–44 (GPSGCGKS) participates in ATP binding.

The protein belongs to the ABC transporter superfamily. sn-glycerol-3-phosphate importer (TC 3.A.1.1.3) family. The complex is composed of two ATP-binding proteins (UgpC), two transmembrane proteins (UgpA and UgpE) and a solute-binding protein (UgpB).

It is found in the cell inner membrane. The enzyme catalyses sn-glycerol 3-phosphate(out) + ATP + H2O = sn-glycerol 3-phosphate(in) + ADP + phosphate + H(+). In terms of biological role, part of the ABC transporter complex UgpBAEC involved in sn-glycerol-3-phosphate (G3P) import. Responsible for energy coupling to the transport system. This Cupriavidus necator (strain ATCC 17699 / DSM 428 / KCTC 22496 / NCIMB 10442 / H16 / Stanier 337) (Ralstonia eutropha) protein is sn-glycerol-3-phosphate import ATP-binding protein UgpC.